The primary structure comprises 195 residues: Endoribonuclease YbeY (195 aa).

Positions 152, 156, and 162 each coordinate Zn(2+).

Belongs to the endoribonuclease YbeY family. The cofactor is Zn(2+).

The protein resides in the cytoplasm. Single strand-specific metallo-endoribonuclease involved in late-stage 70S ribosome quality control and in maturation of the 3' terminus of the 16S rRNA. This Rhodopseudomonas palustris (strain BisB5) protein is Endoribonuclease YbeY.